The following is an 874-amino-acid chain: Alanine--tRNA ligase (874 aa).

Zn(2+) is bound by residues histidine 562, histidine 566, cysteine 665, and histidine 669.

Belongs to the class-II aminoacyl-tRNA synthetase family. Requires Zn(2+) as cofactor.

It localises to the cytoplasm. It catalyses the reaction tRNA(Ala) + L-alanine + ATP = L-alanyl-tRNA(Ala) + AMP + diphosphate. Its function is as follows. Catalyzes the attachment of alanine to tRNA(Ala) in a two-step reaction: alanine is first activated by ATP to form Ala-AMP and then transferred to the acceptor end of tRNA(Ala). Also edits incorrectly charged Ser-tRNA(Ala) and Gly-tRNA(Ala) via its editing domain. The polypeptide is Alanine--tRNA ligase (Pseudomonas fluorescens (strain Pf0-1)).